The chain runs to 310 residues: Putative S-adenosyl-L-methionine-dependent methyltransferase MMAR_0356 (310 aa).

S-adenosyl-L-methionine-binding positions include D137 and 166–167 (DL).

It belongs to the UPF0677 family.

Functionally, exhibits S-adenosyl-L-methionine-dependent methyltransferase activity. This is Putative S-adenosyl-L-methionine-dependent methyltransferase MMAR_0356 from Mycobacterium marinum (strain ATCC BAA-535 / M).